Consider the following 185-residue polypeptide: Ubiquitin-conjugating enzyme E2 2 (185 aa).

One can recognise a UBC core domain in the interval 4–150; it reads PSKKRLIRDF…VKATVEASWL (147 aa). Cysteine 88 acts as the Glycyl thioester intermediate in catalysis. Positions 149-173 are enriched in acidic residues; sequence WLDDGEMPESIEEDDEAEAEAEAEA. The segment at 149 to 185 is disordered; that stretch reads WLDDGEMPESIEEDDEAEAEAEAEATVDRSAPQTASA.

Belongs to the ubiquitin-conjugating enzyme family.

The protein resides in the cytoplasm. It is found in the nucleus. It catalyses the reaction S-ubiquitinyl-[E1 ubiquitin-activating enzyme]-L-cysteine + [E2 ubiquitin-conjugating enzyme]-L-cysteine = [E1 ubiquitin-activating enzyme]-L-cysteine + S-ubiquitinyl-[E2 ubiquitin-conjugating enzyme]-L-cysteine.. Its pathway is protein modification; protein ubiquitination. In terms of biological role, catalyzes the covalent attachment of ubiquitin to other proteins. Plays a role in transcription regulation by catalyzing the monoubiquitination of histone H2B to form H2BK123ub1. H2BK123ub1 gives a specific tag for epigenetic transcriptional activation and is also a prerequisite for H3K4me and H3K79me formation. Also involved in postreplication repair of UV-damaged DNA, in N-end rule-dependent protein degradation and in sporulation. The protein is Ubiquitin-conjugating enzyme E2 2 (UBC2) of Mycosarcoma maydis (Corn smut fungus).